A 364-amino-acid polypeptide reads, in one-letter code: Nuclear hormone receptor family member nhr-53 (364 aa).

Positions 20–95 (PSYCLICCEV…VGMQRSSVQQ (76 aa)) form a DNA-binding region, nuclear receptor. 2 NR C4-type zinc fingers span residues 23–43 (CLIC…CRAC) and 59–83 (CPKN…YEKC). The NR LBD domain maps to 110 to 363 (REEPVLDTMR…KNLYDMFSPT (254 aa)).

The protein belongs to the nuclear hormone receptor family.

Its subcellular location is the nucleus. Functionally, orphan nuclear receptor. This chain is Nuclear hormone receptor family member nhr-53 (nhr-53), found in Caenorhabditis elegans.